The chain runs to 186 residues: Elongation factor P (186 aa).

Arg32 carries an N-alpha-linked (Rha) arginine glycan.

The protein belongs to the elongation factor P family. Glycosylated ar Arg-32 by EarP: arginine rhamnosylation is required for EF-P function and rescue of polyproline stalled ribosomes.

Its subcellular location is the cytoplasm. It participates in protein biosynthesis; polypeptide chain elongation. In terms of biological role, involved in peptide bond synthesis. Stimulates efficient translation and peptide-bond synthesis on native or reconstituted 70S ribosomes in vitro. Probably functions indirectly by altering the affinity of the ribosome for aminoacyl-tRNA, thus increasing their reactivity as acceptors for peptidyl transferase. The sequence is that of Elongation factor P from Shewanella oneidensis (strain ATCC 700550 / JCM 31522 / CIP 106686 / LMG 19005 / NCIMB 14063 / MR-1).